A 352-amino-acid chain; its full sequence is Small ribosomal subunit biogenesis GTPase RsgA (352 aa).

The segment covering 1–21 (MKKNKLSKNQHRRIQAHHQYR) has biased composition (basic residues). The interval 1-38 (MKKNKLSKNQHRRIQAHHQYRLHPTSLTDDKNNQLDDA) is disordered. Residues 116-278 (FYDGIKPMAA…LIDSPGIREF (163 aa)) form the CP-type G domain. GTP-binding positions include 164–167 (NKID) and 218–226 (GQSGVGKSS). C302, C307, H309, and C315 together coordinate Zn(2+).

The protein belongs to the TRAFAC class YlqF/YawG GTPase family. RsgA subfamily. As to quaternary structure, monomer. Associates with 30S ribosomal subunit, binds 16S rRNA. The cofactor is Zn(2+).

Its subcellular location is the cytoplasm. Its function is as follows. One of several proteins that assist in the late maturation steps of the functional core of the 30S ribosomal subunit. Helps release RbfA from mature subunits. May play a role in the assembly of ribosomal proteins into the subunit. Circularly permuted GTPase that catalyzes slow GTP hydrolysis, GTPase activity is stimulated by the 30S ribosomal subunit. This is Small ribosomal subunit biogenesis GTPase RsgA from Hamiltonella defensa subsp. Acyrthosiphon pisum (strain 5AT).